The following is a 290-amino-acid chain: Ribosomal RNA small subunit methyltransferase A (290 aa).

S-adenosyl-L-methionine contacts are provided by asparagine 27, leucine 29, glycine 54, glutamate 75, aspartate 100, and asparagine 125.

The protein belongs to the class I-like SAM-binding methyltransferase superfamily. rRNA adenine N(6)-methyltransferase family. RsmA subfamily.

Its subcellular location is the cytoplasm. The catalysed reaction is adenosine(1518)/adenosine(1519) in 16S rRNA + 4 S-adenosyl-L-methionine = N(6)-dimethyladenosine(1518)/N(6)-dimethyladenosine(1519) in 16S rRNA + 4 S-adenosyl-L-homocysteine + 4 H(+). Its function is as follows. Specifically dimethylates two adjacent adenosines (A1518 and A1519) in the loop of a conserved hairpin near the 3'-end of 16S rRNA in the 30S particle. May play a critical role in biogenesis of 30S subunits. The polypeptide is Ribosomal RNA small subunit methyltransferase A (Streptococcus thermophilus (strain CNRZ 1066)).